A 305-amino-acid polypeptide reads, in one-letter code: Transcription factor MYB87 (305 aa).

HTH myb-type domains follow at residues 9–66 (KMAV…RPNL) and 67–117 (KHGG…KKKL). 2 DNA-binding regions (H-T-H motif) span residues 38–62 (WISLPQRIGIKRCGKSCRLRWLNYL) and 90–113 (WSIIASQLPGRTDNDIKNYWNTRL).

In terms of tissue distribution, expressed in roots, leaves, internodes, shoot tips and flowers.

The protein localises to the nucleus. In terms of biological role, transcription factor that functions as a regulator of genes affecting cell wall organization and remodeling. Activates genes related to the primary cell wall and represses genes related to the secondary cell wall and expansins. Required for the regulation of longitudinal cell growth in stems, leaves, petioles, roots, flowers and siliques. This is Transcription factor MYB87 from Arabidopsis thaliana (Mouse-ear cress).